The sequence spans 88 residues: Small ribosomal subunit protein uS15c (88 aa).

The protein belongs to the universal ribosomal protein uS15 family. As to quaternary structure, part of the 30S ribosomal subunit.

It localises to the plastid. The protein resides in the chloroplast. This Lepidium virginicum (Virginia pepperweed) protein is Small ribosomal subunit protein uS15c (rps15).